A 140-amino-acid chain; its full sequence is Putative pre-16S rRNA nuclease (140 aa).

The protein belongs to the YqgF nuclease family.

Its subcellular location is the cytoplasm. Could be a nuclease involved in processing of the 5'-end of pre-16S rRNA. The sequence is that of Putative pre-16S rRNA nuclease from Vibrio vulnificus (strain YJ016).